We begin with the raw amino-acid sequence, 495 residues long: Ectonucleoside triphosphate diphosphohydrolase 8 (495 aa).

The Cytoplasmic portion of the chain corresponds to 1–8 (MGLSRKEQ). A helical membrane pass occupies residues 9–29 (VFLALLGASGVSGLTALILLL). Topologically, residues 30-471 (VEATSVLLPT…AESYGVWVAK (442 aa)) are extracellular. N-linked (GlcNAc...) asparagine glycosylation occurs at N67. A disulfide bond links C78 and C102. E168 serves as the catalytic Proton acceptor. C246 and C292 are joined by a disulfide. N304 is a glycosylation site (N-linked (GlcNAc...) asparagine). C329 and C335 are joined by a disulfide. N363 is a glycosylation site (N-linked (GlcNAc...) asparagine). A disulfide bridge connects residues C381 and C403. A helical transmembrane segment spans residues 472–492 (VVFMVLALVAVVGAALVQLFW). The Cytoplasmic portion of the chain corresponds to 493 to 495 (LQD).

The protein belongs to the GDA1/CD39 NTPase family. Ca(2+) is required as a cofactor. Requires Mg(2+) as cofactor. In terms of processing, N-glycosylated.

It is found in the cell membrane. It catalyses the reaction a ribonucleoside 5'-triphosphate + 2 H2O = a ribonucleoside 5'-phosphate + 2 phosphate + 2 H(+). Not inhibited by ARL 67156. Canalicular ectonucleoside NTPDase responsible for the main hepatic NTPDase activity. Ectonucleoside NTPDases catalyze the hydrolysis of gamma- and beta-phosphate residues of nucleotides, playing a central role in concentration of extracellular nucleotides. Has activity toward ATP, ADP, UTP and UDP, but not toward AMP. This Homo sapiens (Human) protein is Ectonucleoside triphosphate diphosphohydrolase 8 (ENTPD8).